A 187-amino-acid chain; its full sequence is UPF0301 protein Spro_4027 (187 aa).

Belongs to the UPF0301 (AlgH) family.

This Serratia proteamaculans (strain 568) protein is UPF0301 protein Spro_4027.